The primary structure comprises 638 residues: MYQLTLPDKSIKEVASGFTYRDFIEKELPFLKNKALAVRLNGEEILDLSRTVEKNSNIEVLTYSEKLGWETFQHSAAHLLGMAVQNLYKNANLTVGPVIDNGPGFFYYDIDFQGAIVTPEDFPKIEAEMEKIVKADHPVWRKVVSKKQAIETFQKLGEKYKIEIIDGIPSEEVSIYGMGEWFDLCRGPHVPNSGVLKSFKLTAISGAYWKADKNNSMLTRIYGVAFPTKKELDQYLFQIEEAKKRDHRKIGKEMDLFSFQKEGPGFPFWHPKGTILWNSLAEYLRSECNKRGYQEIKTPAVLSSELWKKSGHWDNFHENMYFTDIDEEDYALKPMNCPGCSLIYKHHLHSYRELPLRFAEFGSVHRHELHGVLHGLFRVRAFTQDDSHIYAPLDYLESEVMDIIDFTFTVYKKFGFSEFKTFIATRPEKSQGKDEDWEFATSTLKQSLEKKGIPYGIKEGEGAFYGPKIEFNIKDSIGRLWQCGTIQVDFSMPERFDLDYTDSDGQKKRPVMIHRAIYGSLERFIGILIEHYEGKFPLWISPNQIRILTVTEKVTDYAKNVYRELLDSGFRVELDTRNEKIGAKIRDSILKKANYLLILGEKEMESNTLAVRMRGQEDTKILTRTGFISNLQDEIKSS.

The region spanning 1-62 (MYQLTLPDKS…EKNSNIEVLT (62 aa)) is the TGS domain. The tract at residues 246–537 (DHRKIGKEMD…LIEHYEGKFP (292 aa)) is catalytic. Positions 337, 388, and 514 each coordinate Zn(2+).

The protein belongs to the class-II aminoacyl-tRNA synthetase family. Homodimer. The cofactor is Zn(2+).

It localises to the cytoplasm. It catalyses the reaction tRNA(Thr) + L-threonine + ATP = L-threonyl-tRNA(Thr) + AMP + diphosphate + H(+). In terms of biological role, catalyzes the attachment of threonine to tRNA(Thr) in a two-step reaction: L-threonine is first activated by ATP to form Thr-AMP and then transferred to the acceptor end of tRNA(Thr). Also edits incorrectly charged L-seryl-tRNA(Thr). The chain is Threonine--tRNA ligase from Leptospira interrogans serogroup Icterohaemorrhagiae serovar copenhageni (strain Fiocruz L1-130).